A 337-amino-acid polypeptide reads, in one-letter code: D-alanine--D-alanine ligase (337 aa).

The ATP-grasp domain maps to Lys-124–Asn-330. An ATP-binding site is contributed by Ala-154–Glu-209. Asp-284, Glu-297, and Asn-299 together coordinate Mg(2+).

Belongs to the D-alanine--D-alanine ligase family. Requires Mg(2+) as cofactor. It depends on Mn(2+) as a cofactor.

The protein resides in the cytoplasm. It carries out the reaction 2 D-alanine + ATP = D-alanyl-D-alanine + ADP + phosphate + H(+). Its pathway is cell wall biogenesis; peptidoglycan biosynthesis. In terms of biological role, cell wall formation. The sequence is that of D-alanine--D-alanine ligase from Shewanella baltica (strain OS223).